A 257-amino-acid polypeptide reads, in one-letter code: Ribonuclease HII (257 aa).

An RNase H type-2 domain is found at 72–257; that stretch reads TYIAGIDEVG…FAPIKDMIQK (186 aa). Positions 78, 79, and 170 each coordinate a divalent metal cation.

The protein belongs to the RNase HII family. It depends on Mn(2+) as a cofactor. The cofactor is Mg(2+).

The protein localises to the cytoplasm. The catalysed reaction is Endonucleolytic cleavage to 5'-phosphomonoester.. Its function is as follows. Endonuclease that specifically degrades the RNA of RNA-DNA hybrids. The chain is Ribonuclease HII from Bacillus cereus (strain ATCC 14579 / DSM 31 / CCUG 7414 / JCM 2152 / NBRC 15305 / NCIMB 9373 / NCTC 2599 / NRRL B-3711).